The primary structure comprises 79 residues: uncharacterized protein (79 aa).

This is an uncharacterized protein from Haemophilus influenzae (strain ATCC 51907 / DSM 11121 / KW20 / Rd).